Consider the following 420-residue polypeptide: UDP-N-acetylglucosamine 1-carboxyvinyltransferase (420 aa).

22–23 (KN) is a binding site for phosphoenolpyruvate. Arg-94 contacts UDP-N-acetyl-alpha-D-glucosamine. Catalysis depends on Cys-118, which acts as the Proton donor. Residue Cys-118 is modified to 2-(S-cysteinyl)pyruvic acid O-phosphothioketal. UDP-N-acetyl-alpha-D-glucosamine-binding residues include Asp-307 and Ile-329.

Belongs to the EPSP synthase family. MurA subfamily.

Its subcellular location is the cytoplasm. It carries out the reaction phosphoenolpyruvate + UDP-N-acetyl-alpha-D-glucosamine = UDP-N-acetyl-3-O-(1-carboxyvinyl)-alpha-D-glucosamine + phosphate. Its pathway is cell wall biogenesis; peptidoglycan biosynthesis. Functionally, cell wall formation. Adds enolpyruvyl to UDP-N-acetylglucosamine. The chain is UDP-N-acetylglucosamine 1-carboxyvinyltransferase from Granulibacter bethesdensis (strain ATCC BAA-1260 / CGDNIH1).